The chain runs to 575 residues: DNA polymerase lambda (575 aa).

In terms of domain architecture, BRCT spans 36-132; that stretch reads EAEEWLSSLR…RLVDVAGFSI (97 aa). The interval 160–205 is disordered; the sequence is ALLQTALPPPPSPTRPVSPPQKTKEAPNTQAQPISDDEASDGEETQ. Positions 166-178 are enriched in pro residues; sequence LPPPPSPTRPVSP. Over residues 194 to 203 the composition is skewed to acidic residues; the sequence is SDDEASDGEE. The segment at 265-279 is DNA-binding; sequence KAYSVQGDKWRALGY. K312 serves as the catalytic Schiff-base intermediate with DNA. Positions 345–348 are DNA-binding; sequence GTKT. Residues R386, 417–420, and 426–429 contribute to the dCTP site; these read SYRR and GDVD. The segment at 420-429 is involved in primer binding; that stretch reads RGKATCGDVD. 3 residues coordinate Mn(2+): D427, D429, and D490. The DNA-binding stretch occupies residues 466–505; that stretch reads ENGQQQKYLGVCRLPGPGWRHRRLDIIVVPYSEFACALLY. N513 lines the dCTP pocket.

The protein belongs to the DNA polymerase type-X family. As to quaternary structure, interacts with PCNA. Interacts with PAXX; promoting POLL recruitment to double-strand breaks (DSBs) and stimulation of the end-filling activity of POLL. Interacts with XRCC4; promoting POLL recruitment to double-strand breaks (DSBs) and stimulation of the end-filling activity of POLL. Interacts with NHEJ1/XLF; promoting POLL recruitment to double-strand breaks (DSBs) and stimulation of the end-filling activity of POLL. Requires Mn(2+) as cofactor.

Its subcellular location is the nucleus. The enzyme catalyses DNA(n) + a 2'-deoxyribonucleoside 5'-triphosphate = DNA(n+1) + diphosphate. DNA polymerase that functions in several pathways of DNA repair. Involved in base excision repair (BER) responsible for repair of lesions that give rise to abasic (AP) sites in DNA. Also contributes to DNA double-strand break repair by non-homologous end joining and homologous recombination. Has both template-dependent and template-independent (terminal transferase) DNA polymerase activities. Also has a 5'-deoxyribose-5-phosphate lyase (dRP lyase) activity. The sequence is that of DNA polymerase lambda from Macaca fascicularis (Crab-eating macaque).